Consider the following 513-residue polypeptide: Bifunctional purine biosynthesis protein PurH (513 aa).

The MGS-like domain occupies 1-147 (MIQIKRALVS…KNHKNVVVLT (147 aa)).

It belongs to the PurH family.

It catalyses the reaction (6R)-10-formyltetrahydrofolate + 5-amino-1-(5-phospho-beta-D-ribosyl)imidazole-4-carboxamide = 5-formamido-1-(5-phospho-D-ribosyl)imidazole-4-carboxamide + (6S)-5,6,7,8-tetrahydrofolate. The catalysed reaction is IMP + H2O = 5-formamido-1-(5-phospho-D-ribosyl)imidazole-4-carboxamide. The protein operates within purine metabolism; IMP biosynthesis via de novo pathway; 5-formamido-1-(5-phospho-D-ribosyl)imidazole-4-carboxamide from 5-amino-1-(5-phospho-D-ribosyl)imidazole-4-carboxamide (10-formyl THF route): step 1/1. It participates in purine metabolism; IMP biosynthesis via de novo pathway; IMP from 5-formamido-1-(5-phospho-D-ribosyl)imidazole-4-carboxamide: step 1/1. The chain is Bifunctional purine biosynthesis protein PurH from Leptospira biflexa serovar Patoc (strain Patoc 1 / Ames).